The chain runs to 147 residues: Large-conductance mechanosensitive channel (147 aa).

The next 2 helical transmembrane spans lie at 14 to 34 (VVDMAVGIVIGAAFGSIVKSL) and 85 to 105 (FGLFVNAIISFTIVAFALFMI).

Belongs to the MscL family. In terms of assembly, homopentamer.

Its subcellular location is the cell inner membrane. Its function is as follows. Channel that opens in response to stretch forces in the membrane lipid bilayer. May participate in the regulation of osmotic pressure changes within the cell. The protein is Large-conductance mechanosensitive channel of Tolumonas auensis (strain DSM 9187 / NBRC 110442 / TA 4).